The primary structure comprises 518 residues: Cytochrome P450 82E3 (518 aa).

The chain crosses the membrane as a helical span at residues 2-22 (VFPVEAIVGLVTFTFLFYFLW). A Glycyl lysine isopeptide (Lys-Gly) (interchain with G-Cter in ubiquitin) cross-link involves residue Lys-254. Cys-458 lines the heme pocket.

This sequence belongs to the cytochrome P450 family. CYP82E2 subfamily. Heme serves as cofactor. Expressed at low levels in green leaves.

The protein resides in the membrane. It functions in the pathway alkaloid biosynthesis; nicotine biosynthesis. In terms of biological role, no nicotine N-demethylase activity. This Nicotiana tabacum (Common tobacco) protein is Cytochrome P450 82E3.